The primary structure comprises 154 residues: Ubiquitin-like protein 4A-A (154 aa).

Residues 1–76 (MILTVKPLQG…LNLVVRPAGE (76 aa)) form the Ubiquitin-like domain.

As to quaternary structure, component of the BAT3 complex.

Its subcellular location is the cytoplasm. It is found in the cytosol. Component of the BAT3 complex, a multiprotein complex involved in the post-translational delivery of tail-anchored (TA) membrane proteins to the endoplasmic reticulum membrane. TA membrane proteins, also named type II transmembrane proteins, contain a single C-terminal transmembrane region. The sequence is that of Ubiquitin-like protein 4A-A (ubl4aa) from Oncorhynchus mykiss (Rainbow trout).